Consider the following 264-residue polypeptide: Glycosylphosphatidylinositol anchor biosynthesis protein 11 (264 aa).

The segment at 1-45 (MPLVDPVTMSTPSTPAKAMGKSLPNTVKDPSPPPKAGSHTRSPVE) is disordered. The next 6 membrane-spanning stretches (helical) occupy residues 49 to 69 (NSYY…VLLW), 83 to 103 (LILP…LPVA), 132 to 152 (LLSL…MVLF), 160 to 180 (APHT…PLFY), 202 to 222 (SVGG…PIPL), and 233 to 253 (VTVL…GRTL).

This sequence belongs to the PIGF family.

The protein resides in the endoplasmic reticulum membrane. Its pathway is glycolipid biosynthesis; glycosylphosphatidylinositol-anchor biosynthesis. Functionally, acts in the GPI biosynthetic pathway between GlcNAc-PI synthesis and GPI transfer to protein. In Pyricularia oryzae (strain 70-15 / ATCC MYA-4617 / FGSC 8958) (Rice blast fungus), this protein is Glycosylphosphatidylinositol anchor biosynthesis protein 11 (GPI11).